Reading from the N-terminus, the 267-residue chain is MSGAGNREQVFPTRMTLGVMKSKLKGAQQGHSLLKRKSEALTKRFRDITQRIDDAKRKMGRVMQTAAFSLAEVQYATGDNISYQVQESVQKARFTVKAKQENVSGVFLPTFDSHINEDVNDFKLTALARGGQQVQKAKLIYSKAVETLVELASLQTAFIILDEVIKITNRRVNAIEHVIIPRTENTIAYINGELDEMDREEFYRLKKVQEKKQEAAAAAEQEEALAKAKAEGATDELAIQQDVEALDIKADKEEVDILQEKEDDVIF.

Belongs to the V-ATPase D subunit family. As to quaternary structure, V-ATPase is a heteromultimeric enzyme composed of a peripheral catalytic V1 complex (components A to H) attached to an integral membrane V0 proton pore complex (components: a, c, c', c'', d, e, f and VOA1).

The protein resides in the vacuole membrane. In terms of biological role, subunit of the V1 complex of vacuolar(H+)-ATPase (V-ATPase), a multisubunit enzyme composed of a peripheral complex (V1) that hydrolyzes ATP and a membrane integral complex (V0) that translocates protons. V-ATPase is responsible for acidifying and maintaining the pH of intracellular compartments. In Candida albicans (strain SC5314 / ATCC MYA-2876) (Yeast), this protein is V-type proton ATPase subunit D (VMA8).